A 223-amino-acid polypeptide reads, in one-letter code: Ubiquitin-conjugating enzyme E2 S (223 aa).

At M1 the chain carries N-acetylmethionine. The region spanning 11 to 157 is the UBC core domain; the sequence is HIIRLVYKEV…ARLLTEIHGG (147 aa). Catalysis depends on C95, which acts as the Glycyl thioester intermediate. Positions 155-223 are disordered; sequence HGGAGGPSGG…TDKKRALRRL (69 aa). A compositionally biased stretch (low complexity) spans 169–195; it reads GRATASGAAASTADPTAPGGPAGAEGP. S174 carries the post-translational modification Phosphoserine. Over residues 209–223 the composition is skewed to basic residues; that stretch reads AAKKKTDKKRALRRL.

This sequence belongs to the ubiquitin-conjugating enzyme family. As to quaternary structure, component of the APC/C complex, composed of at least 14 distinct subunits that assemble into a complex of at least 19 chains with a combined molecular mass of around 1.2 MDa. Within this complex, directly interacts with ANAPC2 and ANAPC4. Interacts with CDC20, FZR1/CDH1 and VHL. In terms of processing, autoubiquitinated by the APC/C complex during G1, leading to its degradation by the proteasome.

The catalysed reaction is S-ubiquitinyl-[E1 ubiquitin-activating enzyme]-L-cysteine + [E2 ubiquitin-conjugating enzyme]-L-cysteine = [E1 ubiquitin-activating enzyme]-L-cysteine + S-ubiquitinyl-[E2 ubiquitin-conjugating enzyme]-L-cysteine.. It participates in protein modification; protein ubiquitination. Accepts ubiquitin from the E1 complex and catalyzes its covalent attachment to other proteins. Catalyzes 'Lys-11'-linked polyubiquitination. Acts as an essential factor of the anaphase promoting complex/cyclosome (APC/C), a cell cycle-regulated ubiquitin ligase that controls progression through mitosis. Acts by specifically elongating 'Lys-11'-linked polyubiquitin chains initiated by the E2 enzyme UBE2C/UBCH10 on APC/C substrates, enhancing the degradation of APC/C substrates by the proteasome and promoting mitotic exit. Also acts by elongating ubiquitin chains initiated by the E2 enzyme UBE2D1/UBCH5 in vitro; it is however unclear whether UBE2D1/UBCH5 acts as an E2 enzyme for the APC/C in vivo. Also involved in ubiquitination and subsequent degradation of VHL, resulting in an accumulation of HIF1A. In vitro able to promote polyubiquitination using all 7 ubiquitin Lys residues, except 'Lys-48'-linked polyubiquitination. This Bos taurus (Bovine) protein is Ubiquitin-conjugating enzyme E2 S (UBE2S).